The primary structure comprises 175 residues: Transcriptional repressor NrdR (175 aa).

A zinc finger lies at Cys-3–Cys-32. Residues Leu-47–Gln-137 enclose the ATP-cone domain.

It belongs to the NrdR family. Zn(2+) is required as a cofactor.

In terms of biological role, negatively regulates transcription of bacterial ribonucleotide reductase nrd genes and operons by binding to NrdR-boxes. The sequence is that of Transcriptional repressor NrdR from Dehalococcoides mccartyi (strain ATCC BAA-2266 / KCTC 15142 / 195) (Dehalococcoides ethenogenes (strain 195)).